The primary structure comprises 103 residues: Large ribosomal subunit protein bL28 (103 aa).

It belongs to the bacterial ribosomal protein bL28 family.

In Anaplasma marginale (strain St. Maries), this protein is Large ribosomal subunit protein bL28.